The following is a 62-amino-acid chain: Large ribosomal subunit protein bL28 (62 aa).

This sequence belongs to the bacterial ribosomal protein bL28 family.

In Aster yellows witches'-broom phytoplasma (strain AYWB), this protein is Large ribosomal subunit protein bL28.